Here is a 141-residue protein sequence, read N- to C-terminus: NADH dehydrogenase [ubiquinone] 1 alpha subcomplex subunit 11 (141 aa).

Ala2 bears the N-acetylalanine mark. A run of 2 helical transmembrane segments spans residues 22 to 43 (TYAT…SVAL) and 58 to 80 (RYTF…SAQV).

As to quaternary structure, complex I is composed of 45 different subunits.

The protein localises to the mitochondrion inner membrane. Functionally, accessory subunit of the mitochondrial membrane respiratory chain NADH dehydrogenase (Complex I), that is believed not to be involved in catalysis. Complex I functions in the transfer of electrons from NADH to the respiratory chain. The immediate electron acceptor for the enzyme is believed to be ubiquinone. This Bos taurus (Bovine) protein is NADH dehydrogenase [ubiquinone] 1 alpha subcomplex subunit 11 (NDUFA11).